The following is a 218-amino-acid chain: Large ribosomal subunit protein uL3 (218 aa).

Belongs to the universal ribosomal protein uL3 family. As to quaternary structure, part of the 50S ribosomal subunit. Forms a cluster with proteins L14 and L19.

In terms of biological role, one of the primary rRNA binding proteins, it binds directly near the 3'-end of the 23S rRNA, where it nucleates assembly of the 50S subunit. The chain is Large ribosomal subunit protein uL3 from Corynebacterium urealyticum (strain ATCC 43042 / DSM 7109).